Here is a 147-residue protein sequence, read N- to C-terminus: Small ribosomal subunit protein uS5 (147 aa).

The S5 DRBM domain maps to 9-72 (FEEVVVNISR…DNAFKNITTV (64 aa)).

Belongs to the universal ribosomal protein uS5 family. As to quaternary structure, part of the 30S ribosomal subunit. Contacts proteins S4 and S8.

Its function is as follows. With S4 and S12 plays an important role in translational accuracy. Functionally, located at the back of the 30S subunit body where it stabilizes the conformation of the head with respect to the body. The chain is Small ribosomal subunit protein uS5 from Nitratiruptor sp. (strain SB155-2).